The following is a 261-amino-acid chain: Ribosome biogenesis protein nsa2 (261 aa).

Basic and acidic residues-rich tracts occupy residues 1–36 (MPQN…HKQS) and 66–82 (KQHE…EKDP). 2 disordered regions span residues 1–44 (MPQN…NLRG) and 64–97 (AIKQ…SNPT). A Nuclear localization signal motif is present at residues 15–22 (GKRLDTEE).

Belongs to the eukaryotic ribosomal protein eS8 family. Ribosome biogenesis protein NSA2 subfamily. Component of the pre-66S ribosomal particle. Interacts with nop7 and rrp1. Interacts with rsa4 (via WD repeats).

The protein localises to the nucleus. It is found in the nucleolus. Its function is as follows. Involved in the biogenesis of the 60S ribosomal subunit. May play a part in the quality control of pre-60S particles. This chain is Ribosome biogenesis protein nsa2 (rbg-52), found in Neurospora crassa (strain ATCC 24698 / 74-OR23-1A / CBS 708.71 / DSM 1257 / FGSC 987).